The following is a 776-amino-acid chain: Meiotic expression up-regulated protein 1/2 (776 aa).

5 coiled-coil regions span residues 87-122 (YVLK…AQEE), 173-227 (FSEL…DLKE), 265-307 (YKVE…NDEE), 362-430 (KMSQ…RNNS), and 496-595 (INNQ…NTEL).

In Schizosaccharomyces pombe (strain 972 / ATCC 24843) (Fission yeast), this protein is Meiotic expression up-regulated protein 1/2 (meu1).